The following is a 291-amino-acid chain: uncharacterized protein (291 aa).

The HTH araC/xylS-type domain maps to 191–289 (KQMLNWIHLH…NMTPLSYKKM (99 aa)). 2 consecutive DNA-binding regions (H-T-H motif) follow at residues 208–229 (EDIAKAGQLSRSECCRYFKRML) and 256–279 (VTEVSYQVGFNSTSYFISKFQQAM).

This is an uncharacterized protein from Bacillus subtilis (strain 168).